A 193-amino-acid polypeptide reads, in one-letter code: dTTP/UTP pyrophosphatase (193 aa).

The active-site Proton acceptor is D77.

It belongs to the Maf family. YhdE subfamily. A divalent metal cation serves as cofactor.

The protein localises to the cytoplasm. The enzyme catalyses dTTP + H2O = dTMP + diphosphate + H(+). It carries out the reaction UTP + H2O = UMP + diphosphate + H(+). In terms of biological role, nucleoside triphosphate pyrophosphatase that hydrolyzes dTTP and UTP. May have a dual role in cell division arrest and in preventing the incorporation of modified nucleotides into cellular nucleic acids. The sequence is that of dTTP/UTP pyrophosphatase from Bacteroides fragilis (strain YCH46).